A 326-amino-acid chain; its full sequence is N-(2-amino-2-carboxyethyl)-L-glutamate synthase (326 aa).

N6-(pyridoxal phosphate)lysine is present on lysine 47. Residues asparagine 77, serine 185–serine 189, and serine 272 each bind pyridoxal 5'-phosphate.

Belongs to the cysteine synthase/cystathionine beta-synthase family. SbnA subfamily. As to quaternary structure, homodimer. The cofactor is pyridoxal 5'-phosphate.

The catalysed reaction is O-phospho-L-serine + L-glutamate = N-[(2S)-2-amino-2-carboxyethyl]-L-glutamate + phosphate + H(+). It functions in the pathway siderophore biosynthesis. In terms of biological role, catalyzes the synthesis of N-((2S)-2-amino-2-carboxyethyl)-L-glutamate (ACEGA) from O-phospho-L-serine and L-glutamate. Involved in the biosynthesis of L-2,3-diaminopropionic acid (L-Dap), a precursor of staphyloferrin B and antibiotics. This chain is N-(2-amino-2-carboxyethyl)-L-glutamate synthase (sbnA), found in Staphylococcus aureus (strain COL).